A 29-amino-acid polypeptide reads, in one-letter code: LFGGLLDKLKEKIKKYCNKENLDKACSKL.

This sequence belongs to the myrmexin family. As to quaternary structure, heterodimer composed of subunit SS1 and subunit LS1 (U1-PSDTX-Pt1b), and heterodimer composed of subunit SS1 and LS2 (U1-PSDTX-Pt1a); disulfide-linked. In terms of tissue distribution, expressed by the venom gland.

It localises to the secreted. Its function is as follows. This heterodimer may have anti-inflammatory properties, since the myrmexin complex (composed of 6 SS-LS heterodimers) inhibits carrageenin-induced edema in a dose-dependent manner (after subcutaneous injection into rats). In Pseudomyrmex triplarinus (Ant), this protein is U1-pseudomyrmecitoxin-Pt1 subunit SS1.